The chain runs to 86 residues: Large ribosomal subunit protein bL27 (86 aa).

A disordered region spans residues 1 to 24; it reads MAHKKAGGSSRNGRDSEGRRLGVK.

The protein belongs to the bacterial ribosomal protein bL27 family.

This Magnetococcus marinus (strain ATCC BAA-1437 / JCM 17883 / MC-1) protein is Large ribosomal subunit protein bL27.